A 39-amino-acid chain; its full sequence is Pro-opiomelanocortin (39 aa).

Position 13 is a valine amide (V13).

It belongs to the POMC family.

Its subcellular location is the secreted. Its function is as follows. Precursor protein for pituitary hormones that regulate stress and environmental adaptation. In terms of biological role, stimulates the adrenal glands to release cortisol. Anorexigenic peptide. Increases the pigmentation of skin by increasing melanin production in melanocytes. In Struthio camelus (Common ostrich), this protein is Pro-opiomelanocortin (POMC).